We begin with the raw amino-acid sequence, 37 residues long: Protein YhiY (37 aa).

The chain is Protein YhiY from Escherichia coli (strain K12).